The primary structure comprises 140 residues: Thymic stromal lymphopoietin (140 aa).

Positions 1 to 19 (MVLLRSLFILQVLVRMGLT) are cleaved as a signal peptide. Residues Asn21 and Asn26 are each glycosylated (N-linked (GlcNAc...) asparagine). 3 disulfides stabilise this stretch: Cys25–Cys98, Cys57–Cys63, and Cys78–Cys121. N-linked (GlcNAc...) asparagine glycosylation is present at Asn123.

In terms of assembly, interacts with a receptor composed of CRLF2 and IL7R. Binding of TSLP to CRLF2/TSLPR is a mechanistic prerequisite for recruitment of IL7R to the high-affinity ternary complex.

Its subcellular location is the secreted. Functionally, cytokine that induces the release of T-cell-attracting chemokines from monocytes and, in particular, enhances the maturation of CD11c(+) dendritic cells. Can induce allergic inflammation by directly activating mast cells. The sequence is that of Thymic stromal lymphopoietin (Tslp) from Mus musculus (Mouse).